Consider the following 605-residue polypeptide: Elongation factor 4 (605 aa).

In terms of domain architecture, tr-type G spans 9 to 192 (NRIRNFCIIA…AIVQRIPAPA (184 aa)). GTP is bound by residues 21 to 26 (DHGKST) and 139 to 142 (NKID).

The protein belongs to the TRAFAC class translation factor GTPase superfamily. Classic translation factor GTPase family. LepA subfamily.

Its subcellular location is the cell inner membrane. It carries out the reaction GTP + H2O = GDP + phosphate + H(+). Required for accurate and efficient protein synthesis under certain stress conditions. May act as a fidelity factor of the translation reaction, by catalyzing a one-codon backward translocation of tRNAs on improperly translocated ribosomes. Back-translocation proceeds from a post-translocation (POST) complex to a pre-translocation (PRE) complex, thus giving elongation factor G a second chance to translocate the tRNAs correctly. Binds to ribosomes in a GTP-dependent manner. This Pelodictyon phaeoclathratiforme (strain DSM 5477 / BU-1) protein is Elongation factor 4.